A 157-amino-acid chain; its full sequence is DNA gyrase inhibitor (157 aa).

Belongs to the DNA gyrase inhibitor family. In terms of assembly, interacts with DNA gyrase.

It localises to the cytoplasm. Functionally, inhibits the supercoiling activity of DNA gyrase. Acts by inhibiting DNA gyrase at an early step, prior to (or at the step of) binding of DNA by the gyrase. It protects cells against toxins that target DNA gyrase, by inhibiting activity of these toxins and reducing the formation of lethal double-strand breaks in the cell. The protein is DNA gyrase inhibitor of Enterobacter lignolyticus (strain SCF1).